The following is a 464-amino-acid chain: MAASCLVLLALCLLLPLLLLGGWKRWRRGRAARHVVAVVLGDVGRSPRMQYHALSLAMHGFSVTLLGFCNSKPHDELLQNNRIQIVGLTELQSLAVGPRVFQYGVKVVLQAMYLLWKLMWREPGAYIFLQNPPGLPSIAVCWFVGCLCGSKLVIDWHNYGYSIMGLVHGPNHPLVLLAKWYEKFFGRLSHLNLCVTNAMREDLADNWHIRAVTVYDKPASFFKETPLDLQHRLFMKLGSMHSPFRARSEPEDPVTERSAFTERDAGSGLVTRLRERPALLVSSTSWTEDEDFSILLAALEKFEQLTLDGHNLPSLVCVITGKGPLREYYSRLIHQKHFQHIQVCTPWLEAEDYPLLLGSADLGVCLHTSSSGLDLPMKVVDMFGCCLPVCAVNFKCLHELVKHEENGLVFEDSEELAAQLQMLFSNFPDPAGKLNQFRKNLRESQQLRWDESWVQTVLPLVMDT.

Topologically, residues Met-1 to Ala-2 are lumenal. The chain crosses the membrane as a helical span at residues Ala-3 to Trp-23. Residues Lys-24 to Arg-99 are Cytoplasmic-facing. Positions Val-100–Trp-120 form an intramembrane region, helical. Residues Arg-121–Thr-464 lie on the Cytoplasmic side of the membrane. Position 242 is a phosphoserine (Ser-242). The tract at residues Pro-243–Glu-262 is disordered.

It belongs to the glycosyltransferase group 1 family. Glycosyltransferase 33 subfamily.

The protein resides in the endoplasmic reticulum membrane. It carries out the reaction an N,N'-diacetylchitobiosyl-diphospho-di-trans,poly-cis-dolichol + GDP-alpha-D-mannose = a beta-D-Man-(1-&gt;4)-beta-D-GlcNAc-(1-&gt;4)-alpha-D-GlcNAc-diphospho-di-trans,poly-cis-dolichol + GDP + H(+). It functions in the pathway protein modification; protein glycosylation. Its function is as follows. Mannosyltransferase that operates in the biosynthetic pathway of dolichol-linked oligosaccharides, the glycan precursors employed in protein asparagine (N)-glycosylation. The assembly of dolichol-linked oligosaccharides begins on the cytosolic side of the endoplasmic reticulum membrane and finishes in its lumen. The sequential addition of sugars to dolichol pyrophosphate produces dolichol-linked oligosaccharides containing fourteen sugars, including two GlcNAcs, nine mannoses and three glucoses. Once assembled, the oligosaccharide is transferred from the lipid to nascent proteins by oligosaccharyltransferases. Catalyzes, on the cytoplasmic face of the endoplasmic reticulum, the addition of the first mannose residues to the dolichol-linked oligosaccharide chain, to produce Man1GlcNAc(2)-PP-dolichol core oligosaccharide. Man1GlcNAc(2)-PP-dolichol is a substrate for ALG2, the following enzyme in the biosynthetic pathway. The sequence is that of Chitobiosyldiphosphodolichol beta-mannosyltransferase from Homo sapiens (Human).